A 501-amino-acid polypeptide reads, in one-letter code: Pyruvate kinase (501 aa).

Arg-50 serves as a coordination point for substrate. 4 residues coordinate K(+): Asn-52, Ser-54, Asp-85, and Thr-86. 52–55 (NFSH) lines the ATP pocket. 2 residues coordinate ATP: Arg-92 and Lys-178. Glu-243 provides a ligand contact to Mg(2+). Positions 266, 267, and 299 each coordinate substrate. Asp-267 is a Mg(2+) binding site.

It belongs to the pyruvate kinase family. As to quaternary structure, homotetramer. The cofactor is Mg(2+). It depends on K(+) as a cofactor.

The catalysed reaction is pyruvate + ATP = phosphoenolpyruvate + ADP + H(+). It functions in the pathway carbohydrate degradation; glycolysis; pyruvate from D-glyceraldehyde 3-phosphate: step 5/5. This is Pyruvate kinase (PYK1) from Lachancea kluyveri (strain ATCC 58438 / CBS 3082 / BCRC 21498 / NBRC 1685 / JCM 7257 / NCYC 543 / NRRL Y-12651) (Yeast).